The primary structure comprises 136 residues: Lymphocyte antigen 6E (136 aa).

The first 26 residues, 1–26 (MSATSNMRVFLPVLLAALLGMEQVHS), serve as a signal peptide directing secretion. The 92-residue stretch at 27-118 (LMCFSCTDQK…AGLGLRASIP (92 aa)) folds into the UPAR/Ly6 domain. Disulfide bonds link cysteine 29-cysteine 54, cysteine 32-cysteine 41, cysteine 47-cysteine 76, cysteine 80-cysteine 98, and cysteine 99-cysteine 104. Asparagine 105 is a glycosylation site (N-linked (GlcNAc...) asparagine). A lipid anchor (GPI-anchor amidated alanine) is attached at alanine 108. Positions 109-136 (AGLGLRASIPLLGLGLLLSLLALLQLSP) are cleaved as a propeptide — removed in mature form.

Interacts with CHRNA4. Interacts with CD3Z/CD247. Ubiquitously expressed in mouse adult tissues with maximal expression in the lung and the salivary gland. Expression is strikingly lower in the fetal tissues except for the placenta. Present in thymus where its expression is observed in immature thymocytes and thymic stromal cells. Also found on functionally active T-cells as well as B-cells and thymic dendritic cells.

Its subcellular location is the cell membrane. GPI-anchored cell surface protein that regulates T-lymphocytes proliferation, differentiation, and activation. Regulates the T-cell receptor (TCR) signaling by interacting with component CD3Z/CD247 at the plasma membrane, leading to CD3Z/CD247 phosphorylation modulation. Restricts the entry of murine coronavirus, mouse hepatitis virus, by interfering with spike protein-mediated membrane fusion. Also plays an essential role in placenta formation by acting as the main receptor for syncytin-A (SynA). Therefore, participates in the normal fusion of syncytiotrophoblast layer I (SynT-I) and in the proper morphogenesis of both fetal and maternal vasculatures within the placenta. May also act as a modulator of nicotinic acetylcholine receptors (nAChRs) activity. In vitro inhibits alpha-3:beta-4-containing nAChRs maximum response. The chain is Lymphocyte antigen 6E from Mus musculus (Mouse).